The sequence spans 200 residues: NAD(P)H dehydrogenase (quinone) (200 aa).

A Flavodoxin-like domain is found at 4–191 (VLVLYYSSYG…GGARYQGALV (188 aa)). FMN-binding positions include 10–15 (SSYGHI) and 79–81 (TRF). Tyr12 contributes to the NAD(+) binding site. Trp99 provides a ligand contact to substrate. Residues 114–120 (STASQHG) and His135 contribute to the FMN site.

This sequence belongs to the WrbA family. FMN serves as cofactor.

It carries out the reaction a quinone + NADH + H(+) = a quinol + NAD(+). It catalyses the reaction a quinone + NADPH + H(+) = a quinol + NADP(+). The protein is NAD(P)H dehydrogenase (quinone) of Rhodospirillum centenum (strain ATCC 51521 / SW).